A 549-amino-acid polypeptide reads, in one-letter code: Ceramide kinase 1 (549 aa).

A DAGKc domain is found at 162–316 (NRPKNIIIFI…VDVCTVHQHQ (155 aa)). ATP-binding positions include 172–174 (NPF) and 205–209 (TERAN). 233-236 (GGDG) is a substrate binding site. Asp-235 functions as the Proton donor/acceptor in the catalytic mechanism. ATP-binding positions include Glu-240, 277 to 279 (GSA), Arg-342, Arg-348, and 500 to 502 (DGE).

It carries out the reaction an N-acylsphing-4-enine + ATP = an N-acylsphing-4-enine 1-phosphate + ADP + H(+). The enzyme catalyses an N-acyl-15-methylhexadecasphing-4-enine + ATP = an N-acyl-15-methylhexadecasphing-4-enine-1-phosphate + ADP + H(+). It functions in the pathway lipid metabolism; sphingolipid metabolism. Functionally, catalyzes the phosphorylation of ceramide to form ceramide 1-phosphate. C.elegans contain specific sphingoid bases, which are unique or different in structure compared to the sphingoid bases found in other animals. Two examples of these distinctive compounds are: 15-methylhexadecasphinganine and 15-methylhexadecasphing-4-enine. In Caenorhabditis elegans, this protein is Ceramide kinase 1.